The sequence spans 660 residues: Anoctamin-10 (660 aa).

Over 1–207 (MKVTLSALDT…DSIRGYFGET (207 aa)) the chain is Cytoplasmic. The helical transmembrane segment at 208–228 (IALYFGFLEYFTFALIPMAVI) threads the bilayer. Residues 229–240 (GLPYYLFVWEDY) are Extracellular-facing. Residues 241–261 (DKYVIFASFNLIWSTVILELW) form a helical membrane-spanning segment. Residues 262 to 316 (KRGCANMTYRWGTLLMKRKFEEPRPGFHGVLGINSITGKEEPLYPSYKRQLRIYL) lie on the Cytoplasmic side of the membrane. The helical transmembrane segment at 317 to 337 (VSLPFVCLCLYFSLYVMMIYF) threads the bilayer. The Extracellular segment spans residues 338 to 352 (DMEVWALGLHENSGS). A helical transmembrane segment spans residues 353–373 (EWTSVLLYVPSIIYAIVIEIM). Topologically, residues 374 to 400 (NRLYRYAAEFLTSWENHRLESAYQNHL) are cytoplasmic. Residues 401–421 (ILKVLVFNFLNCFASLFYIAF) traverse the membrane as a helical segment. Topologically, residues 422–500 (VLKDMKLLRQ…YLGTFDDYLE (79 aa)) are extracellular. The helical transmembrane segment at 501–521 (LFLQFGYVSLFSCVYPLAAAF) threads the bilayer. At 522–553 (AVLNNFTEVNSDALKMCRVFKRPFSEPSANIG) the chain is on the cytoplasmic side. The chain crosses the membrane as a helical span at residues 554–574 (VWQLAFETMSVISVVTNCALI). Over 575 to 590 (GMSPQVNAVFPESKAD) the chain is Extracellular. A helical membrane pass occupies residues 591–611 (LILIVVAVEHALLALKFILAF). The Cytoplasmic portion of the chain corresponds to 612–660 (AIPDKPRHIQMKLARLEFESLEALKQQQMKLVTENLKEEPMESGKEKAT).

Belongs to the anoctamin family. In terms of tissue distribution, highly expressed in the brain. Intermediate levels in the retina and heart and low levels in the placenta, liver, lung, duodenum, kidney, testis and spleen. In brain areas, highest expression in the frontal and occipital cortices and in the cerebellum. Lower expression in the fetal brain than in the adult brain.

The protein localises to the cell membrane. Functionally, does not exhibit calcium-activated chloride channel (CaCC) activity. Can inhibit the activity of ANO1. The sequence is that of Anoctamin-10 (ANO10) from Homo sapiens (Human).